Here is a 101-residue protein sequence, read N- to C-terminus: Large ribosomal subunit protein bL21 (101 aa).

It belongs to the bacterial ribosomal protein bL21 family. As to quaternary structure, part of the 50S ribosomal subunit. Contacts protein L20.

Functionally, this protein binds to 23S rRNA in the presence of protein L20. The protein is Large ribosomal subunit protein bL21 of Corynebacterium aurimucosum (strain ATCC 700975 / DSM 44827 / CIP 107346 / CN-1) (Corynebacterium nigricans).